The chain runs to 272 residues: Cell shape-determining protein MreC (272 aa).

Residues 1–8 (MNRFKKSK) are Cytoplasmic-facing. A helical transmembrane segment spans residues 9 to 29 (YVIIVFVTVLLVSALLATTYS). Over 30–272 (STIVTKLGDG…VDVIELVGNS (243 aa)) the chain is Extracellular. Positions 64–112 (LTRTYNENESLKKQLYQLEVKSNEVESLKTENEQLRQLLDMKSKLQATK) form a coiled coil.

The protein belongs to the MreC family. As to quaternary structure, homodimer. Interacts with a number of proteins in the elongasome, including PBP1a (pbpA), PBP1b, PBP2a, PBP2b (penA), StkP, MltG, MreD and RodZ.

It localises to the cell membrane. Functionally, involved in formation and maintenance of cell shape, probably part of the elongasome which synthesizes peripheral peptidoglycan (PG). This chain is Cell shape-determining protein MreC, found in Streptococcus pneumoniae (strain ATCC BAA-255 / R6).